A 115-amino-acid polypeptide reads, in one-letter code: NTF2-related export protein 1 (115 aa).

The NTF2 domain maps to 7–115 (YAQEFVQRYY…LVLRSSTNFL (109 aa)).

The protein localises to the nucleus. Stimulator of protein export for NES-containing proteins. Also plays a role in mRNA nuclear export. This chain is NTF2-related export protein 1 (nxt1), found in Schizosaccharomyces pombe (strain 972 / ATCC 24843) (Fission yeast).